An 853-amino-acid polypeptide reads, in one-letter code: EF-hand domain-containing family member B (853 aa).

2 disordered regions span residues 1 to 31 (MCSF…TRAP) and 244 to 266 (AQQP…PGNI). EF-hand domains are found at residues 581–616 (QNFD…ANLH) and 617–652 (LDKM…KDRI). Ca(2+) is bound by residues D594, D598, E605, D630, D632, D634, and E641.

Microtubule inner protein component of sperm flagellar doublet microtubules. Interacts with STIM1 and ORAI1; the interactions take place upon Ca(2+)-store depletion and dissociate through a Ca(2+)-dependent mechanism. Interaction with STIM1 inhibits STIM1 interaction with SARAF.

The protein resides in the cytoplasm. It localises to the cytoskeleton. The protein localises to the cilium axoneme. It is found in the flagellum axoneme. Its function is as follows. Microtubule inner protein (MIP) part of the dynein-decorated doublet microtubules (DMTs) in cilia axoneme, which is required for motile cilia beating. Cytosolic sensor for calcium, modulates the interaction of STIM1 and ORAI1 upon store depletion and the activation of store-operated Ca(2+) entry (SOCE) and NFAT translocation from cytosol to nucleus. The chain is EF-hand domain-containing family member B from Mus musculus (Mouse).